The primary structure comprises 262 residues: Outer membrane protein assembly factor BamD (262 aa).

Positions 1–18 (MRKIKSLALLAVAALVIG) are cleaved as a signal peptide. The N-palmitoyl cysteine moiety is linked to residue cysteine 19. Cysteine 19 carries the S-diacylglycerol cysteine lipid modification.

Belongs to the BamD family. As to quaternary structure, part of the Bam complex.

The protein localises to the cell outer membrane. Its function is as follows. Part of the outer membrane protein assembly complex, which is involved in assembly and insertion of beta-barrel proteins into the outer membrane. The protein is Outer membrane protein assembly factor BamD of Haemophilus influenzae (strain ATCC 51907 / DSM 11121 / KW20 / Rd).